The chain runs to 707 residues: NAD(P)H-quinone oxidoreductase subunit 5, chloroplastic (707 aa).

Transmembrane regions (helical) follow at residues W9–F29, W40–I60, I89–I109, F125–I145, I147–T167, I184–E204, N219–A239, T258–A278, L280–I300, L327–I347, A354–S374, I396–S416, W425–Y445, L538–L558, and F592–L612.

It belongs to the complex I subunit 5 family. NDH is composed of at least 16 different subunits, 5 of which are encoded in the nucleus.

It is found in the plastid. It localises to the chloroplast thylakoid membrane. It catalyses the reaction a plastoquinone + NADH + (n+1) H(+)(in) = a plastoquinol + NAD(+) + n H(+)(out). The enzyme catalyses a plastoquinone + NADPH + (n+1) H(+)(in) = a plastoquinol + NADP(+) + n H(+)(out). Functionally, NDH shuttles electrons from NAD(P)H:plastoquinone, via FMN and iron-sulfur (Fe-S) centers, to quinones in the photosynthetic chain and possibly in a chloroplast respiratory chain. The immediate electron acceptor for the enzyme in this species is believed to be plastoquinone. Couples the redox reaction to proton translocation, and thus conserves the redox energy in a proton gradient. This chain is NAD(P)H-quinone oxidoreductase subunit 5, chloroplastic (ndhF), found in Malvaviscus arboreus (Turk's cap).